The primary structure comprises 296 residues: Acetylglutamate kinase (296 aa).

Substrate-binding positions include 67 to 68 (GG), Arg89, and Asn194.

It belongs to the acetylglutamate kinase family. ArgB subfamily.

Its subcellular location is the cytoplasm. The catalysed reaction is N-acetyl-L-glutamate + ATP = N-acetyl-L-glutamyl 5-phosphate + ADP. It participates in amino-acid biosynthesis; L-arginine biosynthesis; N(2)-acetyl-L-ornithine from L-glutamate: step 2/4. Catalyzes the ATP-dependent phosphorylation of N-acetyl-L-glutamate. This is Acetylglutamate kinase from Brucella anthropi (strain ATCC 49188 / DSM 6882 / CCUG 24695 / JCM 21032 / LMG 3331 / NBRC 15819 / NCTC 12168 / Alc 37) (Ochrobactrum anthropi).